Consider the following 256-residue polypeptide: Metallo-beta-lactamase type 2 (256 aa).

Residues Met1–Ala29 form the signal peptide. Zn(2+) is bound by residues His115, His117, Asp119, His178, and Cys197. Positions 200 and 209 each coordinate substrate. His239 serves as a coordination point for Zn(2+).

This sequence belongs to the metallo-beta-lactamase superfamily. Class-B beta-lactamase family. As to quaternary structure, monomer. Zn(2+) serves as cofactor.

The protein localises to the periplasm. It catalyses the reaction a beta-lactam + H2O = a substituted beta-amino acid. Its activity is regulated as follows. Inhibited by chelating agents such as EDTA. Functionally, confers resistance to the different beta-lactams antibiotics (penicillin, cephalosporin and carbapenem) via the hydrolysis of the beta-lactam ring. Benzylpenicillin is a better substrate than cephalosporin C and ampicillin. The sequence is that of Metallo-beta-lactamase type 2 from Bacillus cereus.